The primary structure comprises 304 residues: Cell surface-binding protein OPG105 (304 aa).

Belongs to the alpha-carbonic anhydrase family. In terms of assembly, homodimer; disulfide-linked. Apparently non-glycosylated.

It is found in the virion membrane. Functionally, binds to chondroitin sulfate on the cell surface to provide virion attachment to target cell. The protein is Cell surface-binding protein OPG105 (OPG105) of Monkeypox virus.